The sequence spans 96 residues: Aspartyl/glutamyl-tRNA(Asn/Gln) amidotransferase subunit C (96 aa).

It belongs to the GatC family. As to quaternary structure, heterotrimer of A, B and C subunits.

It catalyses the reaction L-glutamyl-tRNA(Gln) + L-glutamine + ATP + H2O = L-glutaminyl-tRNA(Gln) + L-glutamate + ADP + phosphate + H(+). The enzyme catalyses L-aspartyl-tRNA(Asn) + L-glutamine + ATP + H2O = L-asparaginyl-tRNA(Asn) + L-glutamate + ADP + phosphate + 2 H(+). Allows the formation of correctly charged Asn-tRNA(Asn) or Gln-tRNA(Gln) through the transamidation of misacylated Asp-tRNA(Asn) or Glu-tRNA(Gln) in organisms which lack either or both of asparaginyl-tRNA or glutaminyl-tRNA synthetases. The reaction takes place in the presence of glutamine and ATP through an activated phospho-Asp-tRNA(Asn) or phospho-Glu-tRNA(Gln). The sequence is that of Aspartyl/glutamyl-tRNA(Asn/Gln) amidotransferase subunit C from Geobacillus kaustophilus (strain HTA426).